The primary structure comprises 482 residues: tRNA sulfurtransferase (482 aa).

Residues 61-165 enclose the THUMP domain; it reads DLVRDALTRI…DDRLLLVRGR (105 aa). ATP contacts are provided by residues 183–184, K265, G287, and Q296; that span reads LI. A disulfide bond links C344 and C456. The region spanning 404–482 is the Rhodanese domain; it reads LAEGDVVLDI…GYDNVRVYRP (79 aa). The active-site Cysteine persulfide intermediate is C456.

It belongs to the ThiI family.

Its subcellular location is the cytoplasm. The enzyme catalyses [ThiI sulfur-carrier protein]-S-sulfanyl-L-cysteine + a uridine in tRNA + 2 reduced [2Fe-2S]-[ferredoxin] + ATP + H(+) = [ThiI sulfur-carrier protein]-L-cysteine + a 4-thiouridine in tRNA + 2 oxidized [2Fe-2S]-[ferredoxin] + AMP + diphosphate. It carries out the reaction [ThiS sulfur-carrier protein]-C-terminal Gly-Gly-AMP + S-sulfanyl-L-cysteinyl-[cysteine desulfurase] + AH2 = [ThiS sulfur-carrier protein]-C-terminal-Gly-aminoethanethioate + L-cysteinyl-[cysteine desulfurase] + A + AMP + 2 H(+). The protein operates within cofactor biosynthesis; thiamine diphosphate biosynthesis. Its function is as follows. Catalyzes the ATP-dependent transfer of a sulfur to tRNA to produce 4-thiouridine in position 8 of tRNAs, which functions as a near-UV photosensor. Also catalyzes the transfer of sulfur to the sulfur carrier protein ThiS, forming ThiS-thiocarboxylate. This is a step in the synthesis of thiazole, in the thiamine biosynthesis pathway. The sulfur is donated as persulfide by IscS. This Edwardsiella ictaluri (strain 93-146) protein is tRNA sulfurtransferase.